We begin with the raw amino-acid sequence, 200 residues long: Transcription elongation factor A protein-like 5 (200 aa).

Composition is skewed to basic and acidic residues over residues 1–49, 61–85, 94–106, 114–153, and 190–200; these read MEKF…KLEV, GEGK…KPDS, RAAE…DYVP, DRGT…EELR, and GQKDLEDAPFV. The disordered stretch occupies residues 1–200; that stretch reads MEKFYKENEG…QKDLEDAPFV (200 aa).

The protein belongs to the TFS-II family. TFA subfamily.

The protein resides in the nucleus. Functionally, may be involved in transcriptional regulation. This chain is Transcription elongation factor A protein-like 5 (Tceal5), found in Mus musculus (Mouse).